The primary structure comprises 248 residues: PF03932 family protein CutC (248 aa).

Belongs to the CutC family. In terms of assembly, homodimer.

Its subcellular location is the cytoplasm. The protein is PF03932 family protein CutC of Escherichia coli O7:K1 (strain IAI39 / ExPEC).